Consider the following 174-residue polypeptide: Large ribosomal subunit protein uL10 (174 aa).

The protein belongs to the universal ribosomal protein uL10 family. In terms of assembly, part of the ribosomal stalk of the 50S ribosomal subunit. The N-terminus interacts with L11 and the large rRNA to form the base of the stalk. The C-terminus forms an elongated spine to which L12 dimers bind in a sequential fashion forming a multimeric L10(L12)X complex.

Functionally, forms part of the ribosomal stalk, playing a central role in the interaction of the ribosome with GTP-bound translation factors. The chain is Large ribosomal subunit protein uL10 from Desulfovibrio desulfuricans (strain ATCC 27774 / DSM 6949 / MB).